The following is a 127-amino-acid chain: Ribonuclease P protein component 1 (127 aa).

This sequence belongs to the eukaryotic/archaeal RNase P protein component 1 family. In terms of assembly, consists of a catalytic RNA component and at least 5 protein subunits. Forms a heterodimeric subcomplex with Rnp4. Reconstituted enzyme missing individual protein subunits is suboptimally active, showing each subunit contributes to optimization of activity.

The protein resides in the cytoplasm. It carries out the reaction Endonucleolytic cleavage of RNA, removing 5'-extranucleotides from tRNA precursor.. Its function is as follows. Part of ribonuclease P (RNase P), a protein complex that generates mature tRNA molecules by cleaving their 5'-ends. Binds RNase P RNA. This is Ribonuclease P protein component 1 from Pyrococcus horikoshii (strain ATCC 700860 / DSM 12428 / JCM 9974 / NBRC 100139 / OT-3).